We begin with the raw amino-acid sequence, 462 residues long: L-seryl-tRNA(Sec) selenium transferase (462 aa).

N6-(pyridoxal phosphate)lysine is present on lysine 294.

The protein belongs to the SelA family. Homodecamer; pentamer of dimers. Binds only one seryl-tRNA(Sec) per dimer. The cofactor is pyridoxal 5'-phosphate.

It localises to the cytoplasm. It carries out the reaction L-seryl-tRNA(Sec) + selenophosphate + H(+) = L-selenocysteinyl-tRNA(Sec) + phosphate. Its pathway is aminoacyl-tRNA biosynthesis; selenocysteinyl-tRNA(Sec) biosynthesis; selenocysteinyl-tRNA(Sec) from L-seryl-tRNA(Sec) (bacterial route): step 1/1. Converts seryl-tRNA(Sec) to selenocysteinyl-tRNA(Sec) required for selenoprotein biosynthesis. This is L-seryl-tRNA(Sec) selenium transferase from Yersinia pseudotuberculosis serotype O:1b (strain IP 31758).